A 306-amino-acid chain; its full sequence is Homeobox protein Hox-C13a (306 aa).

Residues G236–V295 constitute a DNA-binding region (homeobox).

The protein belongs to the Abd-B homeobox family.

The protein resides in the nucleus. Its function is as follows. Sequence-specific transcription factor which is part of a developmental regulatory system that provides cells with specific positional identities on the anterior-posterior axis. The polypeptide is Homeobox protein Hox-C13a (hoxc13a) (Danio rerio (Zebrafish)).